We begin with the raw amino-acid sequence, 422 residues long: Protein FAM53B (422 aa).

6 positions are modified to phosphoserine: Ser-118, Ser-167, Ser-169, Ser-179, Ser-212, and Ser-268. Low complexity predominate over residues 245-268 (SANSTPASTPELARRSSGLSRSRS). A disordered region spans residues 245–269 (SANSTPASTPELARRSSGLSRSRSQ). The Nuclear localization signal motif lies at 281-284 (KRRR).

This sequence belongs to the FAM53 family. In terms of assembly, interacts with CTNNB1. As to expression, detected in skeletal muscle, kidney, spleen, thyroid, testis, ovary, small intestine, colon and peripheral blood.

It localises to the nucleus. Its function is as follows. Acts as a regulator of Wnt signaling pathway by regulating beta-catenin (CTNNB1) nuclear localization. The protein is Protein FAM53B of Homo sapiens (Human).